Reading from the N-terminus, the 230-residue chain is Oxygen-evolving enhancer protein 3-2, chloroplastic (230 aa).

The transit peptide at 1–49 directs the protein to the chloroplast; sequence MAQAVTSMAGLRGASQAVLEGSLQINGSNRLNISRVSVGSQRTGLVIRA. A thylakoid-targeting transit peptide spans 50–82; the sequence is QQNVSVPESSRRSVIGLVAAGLAGGSFVKAVFA. Serine 125 carries the phosphoserine modification. Threonine 195 carries the phosphothreonine modification. Tyrosine 215 carries the phosphotyrosine modification. Residue serine 216 is modified to Phosphoserine. Threonine 218 carries the post-translational modification Phosphothreonine.

This sequence belongs to the PsbQ family.

The protein resides in the plastid. It localises to the chloroplast thylakoid membrane. Its function is as follows. Required for photosystem II assembly/stability and photoautotrophic growth under low light conditions. The protein is Oxygen-evolving enhancer protein 3-2, chloroplastic (PSBQ2) of Arabidopsis thaliana (Mouse-ear cress).